A 221-amino-acid polypeptide reads, in one-letter code: Lipoprotein-releasing system ATP-binding protein LolD (221 aa).

An ABC transporter domain is found at L6–I220. G42–S49 provides a ligand contact to ATP.

This sequence belongs to the ABC transporter superfamily. Lipoprotein translocase (TC 3.A.1.125) family. In terms of assembly, the complex is composed of two ATP-binding proteins (LolD) and two transmembrane proteins (LolC and LolE).

It is found in the cell inner membrane. Functionally, part of the ABC transporter complex LolCDE involved in the translocation of mature outer membrane-directed lipoproteins, from the inner membrane to the periplasmic chaperone, LolA. Responsible for the formation of the LolA-lipoprotein complex in an ATP-dependent manner. This chain is Lipoprotein-releasing system ATP-binding protein LolD, found in Rickettsia typhi (strain ATCC VR-144 / Wilmington).